We begin with the raw amino-acid sequence, 212 residues long: Orotate phosphoribosyltransferase (212 aa).

Residues Arg-94, Lys-98, His-100, and 120 to 128 (EDLISTGGS) each bind 5-phospho-alpha-D-ribose 1-diphosphate. Residue Ser-124 participates in orotate binding.

The protein belongs to the purine/pyrimidine phosphoribosyltransferase family. PyrE subfamily. Homodimer. Mg(2+) serves as cofactor.

The catalysed reaction is orotidine 5'-phosphate + diphosphate = orotate + 5-phospho-alpha-D-ribose 1-diphosphate. It participates in pyrimidine metabolism; UMP biosynthesis via de novo pathway; UMP from orotate: step 1/2. Catalyzes the transfer of a ribosyl phosphate group from 5-phosphoribose 1-diphosphate to orotate, leading to the formation of orotidine monophosphate (OMP). The sequence is that of Orotate phosphoribosyltransferase from Bacillus pumilus (strain SAFR-032).